Consider the following 277-residue polypeptide: Alpha carbonic anhydrase 3 (277 aa).

Positions 1–19 (MKTIILFVTFLALSSSSLA) are cleaved as a signal peptide. The Alpha-carbonic anhydrase domain maps to 24–259 (TEFHYKPGEI…LNGRLVYLNE (236 aa)). Cys49 and Cys209 are disulfide-bonded. 2 N-linked (GlcNAc...) asparagine glycosylation sites follow: Asn70 and Asn107. His117, His119, and His136 together coordinate Zn(2+). 205–206 (TT) is a binding site for substrate. A disordered region spans residues 257–277 (LNEQSSPSPTPRLRIPRVGPV).

This sequence belongs to the alpha-class carbonic anhydrase family. Zn(2+) serves as cofactor. N-glycosylated. In terms of tissue distribution, expressed in flowers and siliques.

It is found in the plastid. The protein localises to the chloroplast stroma. The enzyme catalyses hydrogencarbonate + H(+) = CO2 + H2O. In terms of biological role, reversible hydration of carbon dioxide. This chain is Alpha carbonic anhydrase 3 (ACA3), found in Arabidopsis thaliana (Mouse-ear cress).